The sequence spans 426 residues: MSKSENLYSAARELIPGGVNSPVRAFTGVGGTPLFIEKADGAYLYDVDGKAYIDYVGSWGPMVLGHNHPAIRNAVIEAAERGLSFGAPTEMEVKMAELVTNLVPTMDMVRMVNSGTEATMSAIRLARGFTGRDKIIKFEGCYHGHADCLLVKAGSGALTLGQPNSPGVPADFAKHTLTCTYNDLASVRAAFEQYPQEIACIIVEPVAGNMNCVPPLPEFLPGLRALCDEFGALLIIDEVMTGFRVALAGAQDYYGVVPDLTCLGKIIGGGMPVGAFGGRRDVMDALAPTGPVYQAGTLSGNPIAMAAGFACLNEVAQPGIHETLDELTTRLAEGLLEAAEEANIPLVVNHVGGMFGIFFTDAESVTCYQDVMACDVERFKRFFHLMLEEGVYLAPSAFEAGFMSVAHSMDDINNTIDAARRVFAKL.

Residue Lys265 is modified to N6-(pyridoxal phosphate)lysine.

The protein belongs to the class-III pyridoxal-phosphate-dependent aminotransferase family. HemL subfamily. As to quaternary structure, homodimer. Requires pyridoxal 5'-phosphate as cofactor.

The protein resides in the cytoplasm. It carries out the reaction (S)-4-amino-5-oxopentanoate = 5-aminolevulinate. It functions in the pathway porphyrin-containing compound metabolism; protoporphyrin-IX biosynthesis; 5-aminolevulinate from L-glutamyl-tRNA(Glu): step 2/2. In Salmonella schwarzengrund (strain CVM19633), this protein is Glutamate-1-semialdehyde 2,1-aminomutase.